A 473-amino-acid chain; its full sequence is Aspartyl/glutamyl-tRNA(Asn/Gln) amidotransferase subunit B (473 aa).

It belongs to the GatB/GatE family. GatB subfamily. Heterotrimer of A, B and C subunits.

The enzyme catalyses L-glutamyl-tRNA(Gln) + L-glutamine + ATP + H2O = L-glutaminyl-tRNA(Gln) + L-glutamate + ADP + phosphate + H(+). The catalysed reaction is L-aspartyl-tRNA(Asn) + L-glutamine + ATP + H2O = L-asparaginyl-tRNA(Asn) + L-glutamate + ADP + phosphate + 2 H(+). Its function is as follows. Allows the formation of correctly charged Asn-tRNA(Asn) or Gln-tRNA(Gln) through the transamidation of misacylated Asp-tRNA(Asn) or Glu-tRNA(Gln) in organisms which lack either or both of asparaginyl-tRNA or glutaminyl-tRNA synthetases. The reaction takes place in the presence of glutamine and ATP through an activated phospho-Asp-tRNA(Asn) or phospho-Glu-tRNA(Gln). In Levilactobacillus brevis (strain ATCC 367 / BCRC 12310 / CIP 105137 / JCM 1170 / LMG 11437 / NCIMB 947 / NCTC 947) (Lactobacillus brevis), this protein is Aspartyl/glutamyl-tRNA(Asn/Gln) amidotransferase subunit B.